The primary structure comprises 48 residues: Probable antitoxin PhoAT (48 aa).

It belongs to the PhoAT antitoxin family. As to quaternary structure, interacts with toxin PhoH2.

Its function is as follows. Probable antitoxin component of a type II toxin-antitoxin (TA) system. The probable cognate antitoxin is PhoAT; the toxin gene can be expressed in the absence of the antitoxin gene in M.smegmatis strain mc(2)155. The chain is Probable antitoxin PhoAT from Mycolicibacterium smegmatis (strain ATCC 700084 / mc(2)155) (Mycobacterium smegmatis).